Consider the following 304-residue polypeptide: Endonuclease III-like protein 1 (304 aa).

The transit peptide at 1–22 (MTALSARMLTRSRSLGPGAGPR) directs the protein to the mitochondrion. The interval 1-72 (MTALSARMLT…SDSEKGEGAE (72 aa)) is disordered. Over residues 23-42 (GCREEPGPLRRREAAAEARK) the composition is skewed to basic and acidic residues. Residues 28-52 (PGPLRRREAAAEARKSHSPVKRPRK) carry the Bipartite nuclear localization signal motif. Over residues 43–55 (SHSPVKRPRKAQR) the composition is skewed to basic residues. Ser-63 and Ser-65 each carry phosphoserine. The region spanning 191-215 (HYGGDIPASVAELVALPGVGPKMAH) is the HhH domain. Lys-212 serves as the catalytic Nucleophile; for N-glycosylase activity. Residues Cys-282, Cys-289, Cys-292, and Cys-298 each contribute to the [4Fe-4S] cluster site.

It belongs to the Nth/MutY family. In terms of assembly, interacts with YBX1. Interacts with ERCC5/XPG; the interaction stimulates NTHL1 activity and NTHL1 binding to its DNA substrate. [4Fe-4S] cluster is required as a cofactor. Ubiquitinated by TRIM26; leading to proteasomal degradation. As to expression, widely expressed with highest levels in heart and lowest levels in lung and liver.

Its subcellular location is the nucleus. It is found in the mitochondrion. The catalysed reaction is 2'-deoxyribonucleotide-(2'-deoxyribose 5'-phosphate)-2'-deoxyribonucleotide-DNA = a 3'-end 2'-deoxyribonucleotide-(2,3-dehydro-2,3-deoxyribose 5'-phosphate)-DNA + a 5'-end 5'-phospho-2'-deoxyribonucleoside-DNA + H(+). APE1 displaces NTHL1 from the N-glycosylase-generated AP site in DNA, thereby increasing the turnover of the DNA N-glycosylase activity. AP lyase activity is stimulated by YBX1. ERCC5/XPG stimulates NTHL1 activity and NTHL1 binding to its DNA substrate. Bifunctional DNA N-glycosylase with associated apurinic/apyrimidinic (AP) lyase function that catalyzes the first step in base excision repair (BER), the primary repair pathway for the repair of oxidative DNA damage. The DNA N-glycosylase activity releases the damaged DNA base from DNA by cleaving the N-glycosidic bond, leaving an AP site. The AP-lyase activity cleaves the phosphodiester bond 3' to the AP site by a beta-elimination. Primarily recognizes and repairs oxidative base damage of pyrimidines. Also has 8-oxo-7,8-dihydroguanine (8-oxoG) DNA glycosylase activity. Acts preferentially on DNA damage opposite guanine residues in DNA. Is able to process lesions in nucleosomes without requiring or inducing nucleosome disruption. This chain is Endonuclease III-like protein 1, found in Homo sapiens (Human).